A 1464-amino-acid polypeptide reads, in one-letter code: DNA polymerase III PolC-type (1464 aa).

The 157-residue stretch at 426–582 folds into the Exonuclease domain; it reads YVVFDVETTG…YDAEATGRLL (157 aa).

The protein belongs to the DNA polymerase type-C family. PolC subfamily.

Its subcellular location is the cytoplasm. The catalysed reaction is DNA(n) + a 2'-deoxyribonucleoside 5'-triphosphate = DNA(n+1) + diphosphate. Required for replicative DNA synthesis. This DNA polymerase also exhibits 3' to 5' exonuclease activity. The protein is DNA polymerase III PolC-type of Streptococcus thermophilus (strain ATCC BAA-491 / LMD-9).